Reading from the N-terminus, the 146-residue chain is Transcription antitermination protein NusB (146 aa).

This sequence belongs to the NusB family.

Involved in transcription antitermination. Required for transcription of ribosomal RNA (rRNA) genes. Binds specifically to the boxA antiterminator sequence of the ribosomal RNA (rrn) operons. This is Transcription antitermination protein NusB from Koribacter versatilis (strain Ellin345).